The primary structure comprises 562 residues: Nicotinate phosphoribosyltransferase (562 aa).

Nicotinate contacts are provided by tyrosine 36, phenylalanine 183, and threonine 225. The residue at position 228 (histidine 228) is a Phosphohistidine. Threonine 397 is a 5-phospho-alpha-D-ribose 1-diphosphate binding site.

Belongs to the NAPRTase family. Mg(2+) serves as cofactor. Requires Mn(2+) as cofactor. In terms of processing, transiently phosphorylated on a His residue during the reaction cycle. Phosphorylation strongly increases the affinity for substrates and increases the rate of nicotinate D-ribonucleotide production. Dephosphorylation regenerates the low-affinity form of the enzyme, leading to product release.

The enzyme catalyses nicotinate + 5-phospho-alpha-D-ribose 1-diphosphate + ATP + H2O = nicotinate beta-D-ribonucleotide + ADP + phosphate + diphosphate. The protein operates within cofactor biosynthesis; NAD(+) biosynthesis; nicotinate D-ribonucleotide from nicotinate: step 1/1. Its function is as follows. Catalyzes the first step in the biosynthesis of NAD from nicotinic acid, the ATP-dependent synthesis of beta-nicotinate D-ribonucleotide from nicotinate and 5-phospho-D-ribose 1-phosphate. Helps prevent cellular oxidative stress via its role in NAD biosynthesis. The protein is Nicotinate phosphoribosyltransferase of Caenorhabditis elegans.